A 372-amino-acid chain; its full sequence is Aminomethyltransferase (372 aa).

It belongs to the GcvT family. The glycine cleavage system is composed of four proteins: P, T, L and H.

It catalyses the reaction N(6)-[(R)-S(8)-aminomethyldihydrolipoyl]-L-lysyl-[protein] + (6S)-5,6,7,8-tetrahydrofolate = N(6)-[(R)-dihydrolipoyl]-L-lysyl-[protein] + (6R)-5,10-methylene-5,6,7,8-tetrahydrofolate + NH4(+). Its function is as follows. The glycine cleavage system catalyzes the degradation of glycine. The chain is Aminomethyltransferase from Burkholderia multivorans (strain ATCC 17616 / 249).